Reading from the N-terminus, the 277-residue chain is MAAPIGRTLLGVAKGWRQLDRLWAGSSRGLSLEAAPSSSRSPWRLSGALCLQRPPLITKPLTPLQEEMAGLLQQVEVERSLYSDHELRALDEAQRLAKKKADLYDEEQDQDVTLAQDLEDMWEQEFLQFRPGARETEADKKNDRTSLHRKLDRNLILLVREKLGDQDLWMLPQVEWQPGETLRGTAERILATLSENNMEAKFLGNAPCGHYKFKFPKAIRTESDLGVKVFFFKALLLTGDFVQTGKKGRHVWASKEELGDYLQPKYLAQVRRFLLDL.

Residue K217 is modified to N6-succinyllysine. K228 is subject to N6-acetyllysine. K246 carries the N6-succinyllysine modification.

This sequence belongs to the mitochondrion-specific ribosomal protein mL46 family. As to quaternary structure, component of the mitochondrial ribosome large subunit (39S) which comprises a 16S rRNA and about 50 distinct proteins.

It is found in the mitochondrion. The chain is Large ribosomal subunit protein mL46 (Mrpl46) from Rattus norvegicus (Rat).